We begin with the raw amino-acid sequence, 549 residues long: Urocanate hydratase (549 aa).

Residues Gly-46–Gly-47, Gln-124, Gly-170–Gly-172, Glu-190, Arg-195, Asn-236–Ala-237, Gln-257–His-261, Tyr-267–Val-268, and Tyr-316 contribute to the NAD(+) site. Cys-404 is a catalytic residue. Position 486 (Gly-486) interacts with NAD(+).

Belongs to the urocanase family. NAD(+) serves as cofactor.

It is found in the cytoplasm. The enzyme catalyses 4-imidazolone-5-propanoate = trans-urocanate + H2O. The protein operates within amino-acid degradation; L-histidine degradation into L-glutamate; N-formimidoyl-L-glutamate from L-histidine: step 2/3. In terms of biological role, catalyzes the conversion of urocanate to 4-imidazolone-5-propionate. This Caldanaerobacter subterraneus subsp. tengcongensis (strain DSM 15242 / JCM 11007 / NBRC 100824 / MB4) (Thermoanaerobacter tengcongensis) protein is Urocanate hydratase.